The primary structure comprises 610 residues: Zinc metalloproteinase-disintegrin-like halysase (610 aa).

The first 20 residues, 1-20 (MIQVLLVTICLAVFPYQGSS), serve as a signal peptide directing secretion. The propeptide occupies 21–182 (IILESGNVND…WESYEPIKKA (162 aa)). Residues 199 to 395 (KYVKLVMVAD…DMPQCILKKP (197 aa)) form the Peptidase M12B domain. An N-linked (GlcNAc...) asparagine glycan is attached at Asn218. Intrachain disulfides connect Cys310–Cys390, Cys350–Cys374, and Cys352–Cys357. Position 335 (His335) interacts with Zn(2+). Glu336 is a catalytic residue. 2 residues coordinate Zn(2+): His339 and His345. Positions 403–488 (PPVCGNYFVE…AECTDRFQRN (86 aa)) constitute a Disintegrin domain. 6 residues coordinate Ca(2+): Val405, Asn408, Phe410, Glu412, Glu415, and Asp418. Intrachain disulfides connect Cys406–Cys435, Cys417–Cys430, Cys419–Cys425, Cys429–Cys452, Cys443–Cys449, Cys448–Cys474, Cys461–Cys481, Cys468–Cys499, Cys492–Cys504, Cys511–Cys561, Cys526–Cys572, Cys539–Cys549, Cys556–Cys598, and Cys592–Cys603. A D/ECD-tripeptide motif is present at residues 467–469 (ECD).

The protein belongs to the venom metalloproteinase (M12B) family. P-III subfamily. P-IIIa sub-subfamily. In terms of assembly, monomer. Requires Zn(2+) as cofactor. In terms of tissue distribution, expressed by the venom gland.

The protein resides in the secreted. Inhibited by EDTA and EGTA. Not inhibited by PMSF, antipain, pepstatin, and iodoacetamide. Functionally, strongly inhibits the collagen-induced human platelet aggregation (inhibition of alpha-2/beta-1 (ITGA2/ITGB1) integrin). Hydrolyzes the Aalpha-chain of fibrinogen, without cleavage of Bbeta- and gamma-chains. Degrades type IV collagen (but not types I, II and V), fibronectin and vitronectin and also integrins alpha-1/beta-1 (ITGA1/ITGB1) and alpha-5/beta/1 (ITGA5/ITGB1) (but not alpha-V/beta-3 (ITGAV/ITGB3) and alpha-V/beta-5 (ITGAV/ITGB5) integrins). Both metalloproteinase (peptidase M12B) and disintegrin-like domains (recombinantly expressed and named halydin) play characteristic roles to inhibit human platelet aggregation. Induces apoptosis and strongly inhibits proliferation of endothelial cells as well as adhesion of the cells to extracellular matrix proteins. The apoptosis is closely associated with activation of caspase-3 and decreased level of Bcl-X(L)/Bax. Apohalysase, which lacks metalloprotease activity, is also able to induce the apoptosis. Cleaves insulin B chain at '34-His-|-Leu-35', '37-Glu-|-Ala-38', '38-Ala-|-Leu-39', '39-Leu-|-Tyr-40', '40-Tyr-|-Leu-41', '47-Gly-|-Phe-48' and '48-Phe-|-Phe-49' bonds. The chain is Zinc metalloproteinase-disintegrin-like halysase from Gloydius halys (Chinese water mocassin).